The primary structure comprises 346 residues: Elongation factor Ts (346 aa).

Residues 80–83 form an involved in Mg(2+) ion dislocation from EF-Tu region; the sequence is TDFV.

The protein belongs to the EF-Ts family.

The protein resides in the cytoplasm. Functionally, associates with the EF-Tu.GDP complex and induces the exchange of GDP to GTP. It remains bound to the aminoacyl-tRNA.EF-Tu.GTP complex up to the GTP hydrolysis stage on the ribosome. The protein is Elongation factor Ts of Streptococcus pyogenes serotype M18 (strain MGAS8232).